The sequence spans 403 residues: RNA-binding motif, single-stranded-interacting protein 1 (403 aa).

The tract at residues 30–56 (PAHPMAPPSPSTTSSNNNSSSSSNSGW) is disordered. The span at 40-54 (STTSSNNNSSSSSNS) shows a compositional bias: low complexity. RRM domains lie at 62–135 (TNLY…MAKQ) and 141–226 (TNLY…FADG). The residue at position 208 (Thr-208) is a Phosphothreonine.

The protein resides in the nucleus. Single-stranded DNA binding protein that interacts with the region upstream of the MYC gene. Binds specifically to the DNA sequence motif 5'-[AT]CT[AT][AT]T-3'. Probably has a role in DNA replication. The sequence is that of RNA-binding motif, single-stranded-interacting protein 1 from Rattus norvegicus (Rat).